The primary structure comprises 459 residues: Biphenyl dioxygenase subunit alpha (459 aa).

The 99-residue stretch at 58–156 (WLLLGHESHV…KEGDCGFDKA (99 aa)) folds into the Rieske domain. [2Fe-2S] cluster-binding residues include Cys-100, His-102, Cys-120, and His-123. Fe cation is bound by residues His-233 and His-239.

This sequence belongs to the bacterial ring-hydroxylating dioxygenase alpha subunit family. As to quaternary structure, heterohexamer consisting of three BphA subunits and three BphE subunits. A ferredoxin (BphF) and a ferredoxin reductase (BphG) must be present to obtain activity. The cofactor is [2Fe-2S] cluster. Fe cation serves as cofactor.

It catalyses the reaction biphenyl + NADH + O2 + H(+) = (2R,3S)-3-phenylcyclohexa-3,5-diene-1,2-diol + NAD(+). The protein operates within xenobiotic degradation; biphenyl degradation; 2-hydroxy-2,4-pentadienoate and benzoate from biphenyl: step 1/4. This Paraburkholderia xenovorans (strain LB400) protein is Biphenyl dioxygenase subunit alpha (bphA).